Here is a 331-residue protein sequence, read N- to C-terminus: Tetraacyldisaccharide 4'-kinase (331 aa).

Residue 55–62 (TAGGNGKT) participates in ATP binding.

The protein belongs to the LpxK family.

It catalyses the reaction a lipid A disaccharide + ATP = a lipid IVA + ADP + H(+). It functions in the pathway glycolipid biosynthesis; lipid IV(A) biosynthesis; lipid IV(A) from (3R)-3-hydroxytetradecanoyl-[acyl-carrier-protein] and UDP-N-acetyl-alpha-D-glucosamine: step 6/6. Transfers the gamma-phosphate of ATP to the 4'-position of a tetraacyldisaccharide 1-phosphate intermediate (termed DS-1-P) to form tetraacyldisaccharide 1,4'-bis-phosphate (lipid IVA). The protein is Tetraacyldisaccharide 4'-kinase of Edwardsiella ictaluri (strain 93-146).